The sequence spans 270 residues: Pyrroline-5-carboxylate reductase (270 aa).

This sequence belongs to the pyrroline-5-carboxylate reductase family.

It is found in the cytoplasm. The catalysed reaction is L-proline + NADP(+) = (S)-1-pyrroline-5-carboxylate + NADPH + 2 H(+). The enzyme catalyses L-proline + NAD(+) = (S)-1-pyrroline-5-carboxylate + NADH + 2 H(+). Its pathway is amino-acid biosynthesis; L-proline biosynthesis; L-proline from L-glutamate 5-semialdehyde: step 1/1. Its function is as follows. Catalyzes the reduction of 1-pyrroline-5-carboxylate (PCA) to L-proline. This is Pyrroline-5-carboxylate reductase from Methanosarcina acetivorans (strain ATCC 35395 / DSM 2834 / JCM 12185 / C2A).